A 467-amino-acid polypeptide reads, in one-letter code: Peptidoglycan-N-acetylmuramic acid deacetylase PdaC (467 aa).

A helical membrane pass occupies residues 6-26 (IKWFHVLIAVVCVVGLIGFFH). In terms of domain architecture, NodB homology spans 278 to 452 (KVIALTFDDG…KLTDQGYQLV (175 aa)). The active-site Proton acceptor is D285. 3 residues coordinate a divalent metal cation: D286, H336, and H340. H427 acts as the Proton donor in catalysis.

This sequence in the N-terminal section; belongs to the RsiV family. In the C-terminal section; belongs to the polysaccharide deacetylase family.

Its subcellular location is the cell membrane. With respect to regulation, activated by divalent metal cations; Mn(2+) is the most efficient, followed by Ca(2+) and Mg(2+). In contrast to PgdA from S.pneumoniae, these ions are not absolutely required for deacetylase activity. Catalyzes the deacetylation of N-acetylmuramic acid (MurNAc) residues in peptidoglycan, a modification that confers resistance to lysosyme. Is not able to deacetylate N-acetylglucosamine (GlcNAc) residues in peptidoglycan, but can deacylate chitin oligomers such as GlcNAc4 and GlcNAc5. Is essentially not active toward chitosan (partially deacetylated GlcNAc polymer) and has very low activity toward chitin (GlcNAc polymer). Does not deacetylate GlcNAc. This Bacillus subtilis (strain 168) protein is Peptidoglycan-N-acetylmuramic acid deacetylase PdaC (pdaC).